The sequence spans 256 residues: Adenylate kinase (256 aa).

45–50 (GAGKGT) serves as a coordination point for ATP. Residues 67-96 (ATGDLLRQQVAMGTDLGKQAKKIMDQGALV) are NMP. Residues Thr68, Arg73, 94-96 (ALV), 123-126 (GFPR), and Gln130 each bind AMP. An LID region spans residues 164–201 (GRLIHPGSGRSYHKIFSPPKQPMKDDITGEPLVQRSDD). ATP-binding positions include Arg165 and 174–175 (SY). Arg198 and Arg209 together coordinate AMP. Gln237 lines the ATP pocket.

Belongs to the adenylate kinase family. AK2 subfamily. Monomer.

The protein localises to the cytoplasm. It localises to the cytosol. The protein resides in the mitochondrion intermembrane space. The enzyme catalyses AMP + ATP = 2 ADP. Its function is as follows. Catalyzes the reversible transfer of the terminal phosphate group between ATP and AMP. Plays an important role in cellular energy homeostasis and in adenine nucleotide metabolism. Adenylate kinase activity is critical for regulation of the phosphate utilization and the AMP de novo biosynthesis pathways. This chain is Adenylate kinase, found in Malassezia globosa (strain ATCC MYA-4612 / CBS 7966) (Dandruff-associated fungus).